Here is a 238-residue protein sequence, read N- to C-terminus: MRPAGRSANQVRPVTLTRNYTKHAEGSVLVEFGDTKVLCTASIEEGVPRFLKGQGQGWITAEYGMLPRATHTRNAREAAKGKQGGRTMEIQRLIARALRAAVDLKTLGEFTITLDCDVIQADGGTRTASITGACVALADALNKLVANGKLKTNPMKGMVAAVSVGIVNGEAICDLEYVEDSAAETDMNVVMTEDGRIIEVQGTAEGEPFSHEELLTLLSLARGGIESIVATQKAALEN.

Residues Arg-86 and 124 to 126 each bind phosphate; that span reads GTR.

This sequence belongs to the RNase PH family. As to quaternary structure, homohexameric ring arranged as a trimer of dimers.

The enzyme catalyses tRNA(n+1) + phosphate = tRNA(n) + a ribonucleoside 5'-diphosphate. Its function is as follows. Phosphorolytic 3'-5' exoribonuclease that plays an important role in tRNA 3'-end maturation. Removes nucleotide residues following the 3'-CCA terminus of tRNAs; can also add nucleotides to the ends of RNA molecules by using nucleoside diphosphates as substrates, but this may not be physiologically important. Probably plays a role in initiation of 16S rRNA degradation (leading to ribosome degradation) during starvation. The protein is Ribonuclease PH of Salmonella gallinarum (strain 287/91 / NCTC 13346).